Consider the following 539-residue polypeptide: Bifunctional purine biosynthesis protein PurH (539 aa).

The 152-residue stretch at 8-159 folds into the MGS-like domain; that stretch reads FPIPDLHRVR…KNYAYTGVVT (152 aa).

The protein belongs to the PurH family.

It catalyses the reaction (6R)-10-formyltetrahydrofolate + 5-amino-1-(5-phospho-beta-D-ribosyl)imidazole-4-carboxamide = 5-formamido-1-(5-phospho-D-ribosyl)imidazole-4-carboxamide + (6S)-5,6,7,8-tetrahydrofolate. It carries out the reaction IMP + H2O = 5-formamido-1-(5-phospho-D-ribosyl)imidazole-4-carboxamide. The protein operates within purine metabolism; IMP biosynthesis via de novo pathway; 5-formamido-1-(5-phospho-D-ribosyl)imidazole-4-carboxamide from 5-amino-1-(5-phospho-D-ribosyl)imidazole-4-carboxamide (10-formyl THF route): step 1/1. It functions in the pathway purine metabolism; IMP biosynthesis via de novo pathway; IMP from 5-formamido-1-(5-phospho-D-ribosyl)imidazole-4-carboxamide: step 1/1. The chain is Bifunctional purine biosynthesis protein PurH from Bartonella tribocorum (strain CIP 105476 / IBS 506).